Reading from the N-terminus, the 435-residue chain is 3-ketoacyl-CoA thiolase (435 aa).

C98 (acyl-thioester intermediate) is an active-site residue. Catalysis depends on proton acceptor residues H391 and C421.

This sequence belongs to the thiolase-like superfamily. Thiolase family. As to quaternary structure, heterotetramer of two alpha chains (FadJ) and two beta chains (FadI).

Its subcellular location is the cytoplasm. It carries out the reaction an acyl-CoA + acetyl-CoA = a 3-oxoacyl-CoA + CoA. Its pathway is lipid metabolism; fatty acid beta-oxidation. Functionally, catalyzes the final step of fatty acid oxidation in which acetyl-CoA is released and the CoA ester of a fatty acid two carbons shorter is formed. The chain is 3-ketoacyl-CoA thiolase from Vibrio cholerae serotype O1 (strain ATCC 39315 / El Tor Inaba N16961).